The chain runs to 386 residues: MIDSATVAAILASVLDGKPLEPEAATVLLKARDRSLRQQIQAAANQLRSRQVGDRVSYVINRNLNFTNICEQHCNFCAFRRDADQDGAFWLDASILLEKGAAAVAAGATEFCLQGGLNPAAKRNGRSLDFYVELTASLKQAFPQIHLHAFSPQEIQFIAREDGLSFREVLMALRSAGVGSLPGTAAEVLDDSVRRILCPEKLDSATWKTIIQTAHQVGLPTTSTLLSGHLETPSQQAQHLEQLRQLQQAAIAGETPARITEFILLPFVGELAPAPLRKRVKRDQPDLSDALLVMAVARLYLGDWIANHQPSWVKLGLAGATQALDWGCNDLGGTLMEEHITSMAGAQGGTAQTVEQLEAAIAAAGRQPYQRDTLYRPVAVEAVHAG.

One can recognise a Radical SAM core domain in the interval 56-303 (VSYVINRNLN…MAVARLYLGD (248 aa)). [4Fe-4S] cluster contacts are provided by Cys-70, Cys-74, and Cys-77.

It belongs to the radical SAM superfamily. CofH family. Consists of two subunits, CofG and CofH. Requires [4Fe-4S] cluster as cofactor.

It catalyses the reaction 5-amino-6-(D-ribitylamino)uracil + L-tyrosine + S-adenosyl-L-methionine = 5-amino-5-(4-hydroxybenzyl)-6-(D-ribitylimino)-5,6-dihydrouracil + 2-iminoacetate + 5'-deoxyadenosine + L-methionine + H(+). The protein operates within cofactor biosynthesis; coenzyme F0 biosynthesis. Functionally, catalyzes the radical-mediated synthesis of 5-amino-5-(4-hydroxybenzyl)-6-(D-ribitylimino)-5,6-dihydrouracil from 5-amino-6-(D-ribitylamino)uracil and L-tyrosine. The polypeptide is 5-amino-6-(D-ribitylamino)uracil--L-tyrosine 4-hydroxyphenyl transferase (Synechococcus elongatus (strain ATCC 33912 / PCC 7942 / FACHB-805) (Anacystis nidulans R2)).